We begin with the raw amino-acid sequence, 157 residues long: Glycine-rich RNA-binding, abscisic acid-inducible protein (157 aa).

The region spanning 8 to 86 (YRCFVGGLAW…RNITVNQAQS (79 aa)) is the RRM domain. The segment at 82–157 (NQAQSRGGGG…YGGGGGGWRD (76 aa)) is disordered. Residues 87–157 (RGGGGGGGGY…YGGGGGGWRD (71 aa)) are compositionally biased toward gly residues.

In terms of biological role, possibly has a role in RNA transcription or processing during stress. The chain is Glycine-rich RNA-binding, abscisic acid-inducible protein (RAB15) from Zea mays (Maize).